Consider the following 121-residue polypeptide: Large ribosomal subunit protein bL12 (121 aa).

This sequence belongs to the bacterial ribosomal protein bL12 family. Homodimer. Part of the ribosomal stalk of the 50S ribosomal subunit. Forms a multimeric L10(L12)X complex, where L10 forms an elongated spine to which 2 to 4 L12 dimers bind in a sequential fashion. Binds GTP-bound translation factors.

In terms of biological role, forms part of the ribosomal stalk which helps the ribosome interact with GTP-bound translation factors. Is thus essential for accurate translation. The polypeptide is Large ribosomal subunit protein bL12 (Xanthomonas axonopodis pv. citri (strain 306)).